The chain runs to 137 residues: Putative nickel-responsive regulator (137 aa).

Ni(2+)-binding residues include histidine 79, histidine 90, histidine 92, and cysteine 98.

The protein belongs to the transcriptional regulatory CopG/NikR family. Ni(2+) serves as cofactor.

Transcriptional regulator. This Campylobacter concisus (strain 13826) protein is Putative nickel-responsive regulator.